A 567-amino-acid chain; its full sequence is Synaptotagmin-like protein 1 (567 aa).

The RabBD domain maps to 31-87 (LLDLSFLTEEEQEAISDVLKRDAHLRQLEEGRVSKLRASLEDPWQLKILTGDWFQEA). The disordered stretch occupies residues 103–255 (RASIRRKKSP…VSSLNSSTLS (153 aa)). The residue at position 120 (serine 120) is a Phosphoserine. Composition is skewed to acidic residues over residues 122–135 (GEAE…IEGE) and 170–184 (GQEE…ELEA). Residues 208-219 (ESQPTPAQSKAT) are compositionally biased toward polar residues. Serine 220 carries the phosphoserine modification. Over residues 235–255 (SLDRMLSSSSSVSSLNSSTLS) the composition is skewed to low complexity. 2 consecutive C2 domains span residues 271–390 (VRGS…WLPL) and 403–532 (SRGL…VPWM).

As to quaternary structure, monomer. Binds NCF2 and NRXN1. Binds RAB27A that has been activated by GTP-binding via its N-terminus. In terms of tissue distribution, highly expressed in lung. Detected at lower levels in spleen, liver and kidney, and at very low levels in heart, brain and skeletal muscle. Expressed in cytotoxic T-lymphocytes (CTL).

The protein localises to the endomembrane system. It is found in the cell membrane. Binds phosphatidylinositol 3,4,5-trisphosphate. May play a role in vesicle trafficking. Acts as a RAB27A effector protein and may play a role in cytotoxic granule exocytosis in lymphocytes. This is Synaptotagmin-like protein 1 (Sytl1) from Mus musculus (Mouse).